The primary structure comprises 281 residues: Energy-coupling factor transporter ATP-binding protein EcfA1 (281 aa).

The region spanning 6-245 (IKSEDLVFKY…VEKIKSIGLD (240 aa)) is the ABC transporter domain. 44-51 (GHNGSGKS) contacts ATP.

The protein belongs to the ABC transporter superfamily. Energy-coupling factor EcfA family. Forms a stable energy-coupling factor (ECF) transporter complex composed of 2 membrane-embedded substrate-binding proteins (S component), 2 ATP-binding proteins (A component) and 2 transmembrane proteins (T component).

The protein localises to the cell membrane. ATP-binding (A) component of a common energy-coupling factor (ECF) ABC-transporter complex. Unlike classic ABC transporters this ECF transporter provides the energy necessary to transport a number of different substrates. The polypeptide is Energy-coupling factor transporter ATP-binding protein EcfA1 (Clostridium perfringens (strain ATCC 13124 / DSM 756 / JCM 1290 / NCIMB 6125 / NCTC 8237 / Type A)).